Here is a 412-residue protein sequence, read N- to C-terminus: MNDLIIQNIKELILPKSTERPLKGKELGELNITENGTVVVKNGKIVYAGEHSDAYEATETIDATDKVVSPALVEAHTHLVHGGSREHEMSLKRQGVSYLEILEQGGGILSTVEATRKATEEALFKKAEKNLLTMMEHGVLAVESKSGYGLDKENELKQLRVSNRLAEKYNLDMKHTFLGPHAVPKDAESNQDFLQEMIDLLPEVKAYADFADIFCETGVFTVEESKKYMEAAKALGFDVKIHADEIDPLGGLELAIDENAISADHLVASSTEGKEKLKNSDTVAVLLPGTTFYLGKESYADARGMLDNDGAIAIATDFNPGSCVTNNLQLVMSIAALKLKLSPNEIWNAVTVNAAKAIDIDAGTINQGDKANIVIWDAPNHEYIPYHYGINHAEKVIKDGKVLIDNRIKLEQ.

Residues histidine 76 and histidine 78 each contribute to the Fe(3+) site. Positions 76 and 78 each coordinate Zn(2+). Arginine 85, tyrosine 148, and histidine 181 together coordinate 4-imidazolone-5-propanoate. Tyrosine 148 serves as a coordination point for N-formimidoyl-L-glutamate. Histidine 242 serves as a coordination point for Fe(3+). Histidine 242 contacts Zn(2+). Glutamate 245 is a binding site for 4-imidazolone-5-propanoate. A Fe(3+)-binding site is contributed by aspartate 317. Aspartate 317 is a binding site for Zn(2+). N-formimidoyl-L-glutamate-binding residues include asparagine 319 and glycine 321. Position 322 (serine 322) interacts with 4-imidazolone-5-propanoate.

The protein belongs to the metallo-dependent hydrolases superfamily. HutI family. Zn(2+) serves as cofactor. Requires Fe(3+) as cofactor.

The protein localises to the cytoplasm. The enzyme catalyses 4-imidazolone-5-propanoate + H2O = N-formimidoyl-L-glutamate. Its pathway is amino-acid degradation; L-histidine degradation into L-glutamate; N-formimidoyl-L-glutamate from L-histidine: step 3/3. Functionally, catalyzes the hydrolytic cleavage of the carbon-nitrogen bond in imidazolone-5-propanoate to yield N-formimidoyl-L-glutamate. It is the third step in the universal histidine degradation pathway. This Staphylococcus saprophyticus subsp. saprophyticus (strain ATCC 15305 / DSM 20229 / NCIMB 8711 / NCTC 7292 / S-41) protein is Imidazolonepropionase.